The following is a 319-amino-acid chain: Protein sprouty homolog 1 (319 aa).

Met1 bears the N-acetylmethionine mark. Positions 54-157 are disordered; sequence TEGPSVVKRP…HRSERAIRTQ (104 aa). Residues 69–79 are compositionally biased toward basic and acidic residues; it reads PRQEKHERTHE. Low complexity predominate over residues 112–131; sequence SRSTSTGSAASSGSNSSASS. An SPR domain is found at 183-295; sequence QCGKCKCGEC…CYDWIHRPGC (113 aa).

It belongs to the sprouty family. Forms heterodimers with SPRY2. Interacts with TESK1. Interacts with CAV1 (via C-terminus).

Its subcellular location is the cytoplasm. The protein localises to the membrane. Inhibits fibroblast growth factor (FGF)-induced retinal lens fiber differentiation, probably by inhibiting FGF-mediated phosphorylation of ERK1/2. Inhibits TGFB-induced epithelial-to-mesenchymal transition in lens epithelial cells. This Bos taurus (Bovine) protein is Protein sprouty homolog 1 (SPRY1).